Consider the following 512-residue polypeptide: Maturase K (512 aa).

Belongs to the intron maturase 2 family. MatK subfamily.

Its subcellular location is the plastid. It localises to the chloroplast. Its function is as follows. Usually encoded in the trnK tRNA gene intron. Probably assists in splicing its own and other chloroplast group II introns. In Erythranthe guttata (Yellow monkey flower), this protein is Maturase K.